The primary structure comprises 359 residues: WAT1-related protein At5g64700 (359 aa).

Transmembrane regions (helical) follow at residues L10–F30, F37–F57, L66–L86, L100–G120, L135–L155, W186–L206, L218–A238, A256–I276, V282–L302, and I306–L326. EamA domains are found at residues I18–V136 and I198–L326.

It belongs to the drug/metabolite transporter (DMT) superfamily. Plant drug/metabolite exporter (P-DME) (TC 2.A.7.4) family.

It is found in the membrane. This Arabidopsis thaliana (Mouse-ear cress) protein is WAT1-related protein At5g64700.